The sequence spans 67 residues: Large ribosomal subunit protein uL29 (67 aa).

The protein belongs to the universal ribosomal protein uL29 family.

The protein is Large ribosomal subunit protein uL29 of Desulforudis audaxviator (strain MP104C).